The chain runs to 434 residues: Trigger factor (434 aa).

The PPIase FKBP-type domain maps to 160–245 (DDKVKMNFIG…LTEVQAANLP (86 aa)).

This sequence belongs to the FKBP-type PPIase family. Tig subfamily.

It is found in the cytoplasm. The catalysed reaction is [protein]-peptidylproline (omega=180) = [protein]-peptidylproline (omega=0). Involved in protein export. Acts as a chaperone by maintaining the newly synthesized protein in an open conformation. Functions as a peptidyl-prolyl cis-trans isomerase. The protein is Trigger factor of Shewanella frigidimarina (strain NCIMB 400).